The following is a 674-amino-acid chain: Translation factor GUF1, mitochondrial (674 aa).

The N-terminal 48 residues, 1-48 (MRGCLQPARWLTTATLRRPLLSCPRQLPTRYNPFPRPFHHAPVLQARQ), are a transit peptide targeting the mitochondrion. Positions 66-246 (ERYRNFCIVA…AIIESIPALL (181 aa)) constitute a tr-type G domain. GTP contacts are provided by residues 75–82 (AHVDHGKS), 139–143 (DTPGH), and 193–196 (NKVD).

Belongs to the TRAFAC class translation factor GTPase superfamily. Classic translation factor GTPase family. LepA subfamily.

The protein localises to the mitochondrion inner membrane. The catalysed reaction is GTP + H2O = GDP + phosphate + H(+). Promotes mitochondrial protein synthesis. May act as a fidelity factor of the translation reaction, by catalyzing a one-codon backward translocation of tRNAs on improperly translocated ribosomes. Binds to mitochondrial ribosomes in a GTP-dependent manner. This is Translation factor GUF1, mitochondrial from Arthroderma otae (strain ATCC MYA-4605 / CBS 113480) (Microsporum canis).